We begin with the raw amino-acid sequence, 505 residues long: UDP-N-acetylmuramoyl-L-alanyl-D-glutamate--2,6-diaminopimelate ligase (505 aa).

Serine 42 lines the UDP-N-acetyl-alpha-D-muramoyl-L-alanyl-D-glutamate pocket. Residue 126 to 132 participates in ATP binding; it reads GTNGKTT. UDP-N-acetyl-alpha-D-muramoyl-L-alanyl-D-glutamate is bound by residues 168–169, serine 195, glutamine 201, and arginine 203; that span reads TT. Lysine 235 carries the N6-carboxylysine modification. Residues arginine 399, 423-426, glycine 474, and glutamate 478 each bind meso-2,6-diaminopimelate; that span reads DNPR. The Meso-diaminopimelate recognition motif signature appears at 423–426; it reads DNPR.

This sequence belongs to the MurCDEF family. MurE subfamily. Mg(2+) serves as cofactor. Post-translationally, carboxylation is probably crucial for Mg(2+) binding and, consequently, for the gamma-phosphate positioning of ATP.

It is found in the cytoplasm. The enzyme catalyses UDP-N-acetyl-alpha-D-muramoyl-L-alanyl-D-glutamate + meso-2,6-diaminopimelate + ATP = UDP-N-acetyl-alpha-D-muramoyl-L-alanyl-gamma-D-glutamyl-meso-2,6-diaminopimelate + ADP + phosphate + H(+). It functions in the pathway cell wall biogenesis; peptidoglycan biosynthesis. Its function is as follows. Catalyzes the addition of meso-diaminopimelic acid to the nucleotide precursor UDP-N-acetylmuramoyl-L-alanyl-D-glutamate (UMAG) in the biosynthesis of bacterial cell-wall peptidoglycan. The polypeptide is UDP-N-acetylmuramoyl-L-alanyl-D-glutamate--2,6-diaminopimelate ligase (Synechocystis sp. (strain ATCC 27184 / PCC 6803 / Kazusa)).